The sequence spans 372 residues: Queuine tRNA-ribosyltransferase (372 aa).

The active-site Proton acceptor is the aspartate 89. Residues 89 to 93, aspartate 161, and glycine 232 contribute to the substrate site; that span reads DSGGF. An RNA binding region spans residues 262-268; the sequence is GIGDLPS. Aspartate 281 acts as the Nucleophile in catalysis. Residues 286–290 are RNA binding; important for wobble base 34 recognition; it reads TKAAR. Positions 319, 321, 324, and 351 each coordinate Zn(2+).

This sequence belongs to the queuine tRNA-ribosyltransferase family. As to quaternary structure, homodimer. Within each dimer, one monomer is responsible for RNA recognition and catalysis, while the other monomer binds to the replacement base PreQ1. The cofactor is Zn(2+).

The enzyme catalyses 7-aminomethyl-7-carbaguanine + guanosine(34) in tRNA = 7-aminomethyl-7-carbaguanosine(34) in tRNA + guanine. It functions in the pathway tRNA modification; tRNA-queuosine biosynthesis. Functionally, catalyzes the base-exchange of a guanine (G) residue with the queuine precursor 7-aminomethyl-7-deazaguanine (PreQ1) at position 34 (anticodon wobble position) in tRNAs with GU(N) anticodons (tRNA-Asp, -Asn, -His and -Tyr). Catalysis occurs through a double-displacement mechanism. The nucleophile active site attacks the C1' of nucleotide 34 to detach the guanine base from the RNA, forming a covalent enzyme-RNA intermediate. The proton acceptor active site deprotonates the incoming PreQ1, allowing a nucleophilic attack on the C1' of the ribose to form the product. After dissociation, two additional enzymatic reactions on the tRNA convert PreQ1 to queuine (Q), resulting in the hypermodified nucleoside queuosine (7-(((4,5-cis-dihydroxy-2-cyclopenten-1-yl)amino)methyl)-7-deazaguanosine). In Chlamydia muridarum (strain MoPn / Nigg), this protein is Queuine tRNA-ribosyltransferase.